We begin with the raw amino-acid sequence, 536 residues long: 3',5'-cyclic-AMP phosphodiesterase 4C (536 aa).

A disordered region spans residues 49 to 69; the sequence is QALLGTPPQSSQQAAPAEESG. Residues 178–507 form the PDEase domain; sequence VQTDQEEQLA…EWYQSRVPCS (330 aa). Residue His-254 is the Proton donor of the active site. His-254 contacts 3',5'-cyclic AMP. Positions 254 and 258 each coordinate AMP. 4 residues coordinate Zn(2+): His-258, His-294, Asp-295, and Asp-412. Residues Asp-295, Asp-412, Gln-463, and Phe-466 each coordinate AMP. Asp-295 serves as a coordination point for Mg(2+). Asp-295 provides a ligand contact to Mn(2+). 3',5'-cyclic AMP is bound by residues Gln-463 and Phe-466. Ser-507 is modified (phosphoserine).

The protein belongs to the cyclic nucleotide phosphodiesterase family. PDE4 subfamily. In terms of assembly, part of a complex containing AKAP5, ADCY5, ADCY6 and PKD2. Zn(2+) serves as cofactor. The cofactor is Mg(2+). Requires Mn(2+) as cofactor.

Its subcellular location is the cell projection. The protein localises to the cilium. It catalyses the reaction 3',5'-cyclic AMP + H2O = AMP + H(+). It functions in the pathway purine metabolism; 3',5'-cyclic AMP degradation; AMP from 3',5'-cyclic AMP: step 1/1. Hydrolyzes the second messenger cAMP, which is a key regulator of many important physiological processes. In Rattus norvegicus (Rat), this protein is 3',5'-cyclic-AMP phosphodiesterase 4C.